A 194-amino-acid polypeptide reads, in one-letter code: Imidazoleglycerol-phosphate dehydratase (194 aa).

The protein belongs to the imidazoleglycerol-phosphate dehydratase family.

Its subcellular location is the cytoplasm. It catalyses the reaction D-erythro-1-(imidazol-4-yl)glycerol 3-phosphate = 3-(imidazol-4-yl)-2-oxopropyl phosphate + H2O. The protein operates within amino-acid biosynthesis; L-histidine biosynthesis; L-histidine from 5-phospho-alpha-D-ribose 1-diphosphate: step 6/9. This chain is Imidazoleglycerol-phosphate dehydratase, found in Clostridium kluyveri (strain NBRC 12016).